A 249-amino-acid chain; its full sequence is Probable septum site-determining protein MinC (249 aa).

A disordered region spans residues 116–149 (AAVSPPPPPPPPPARAEPAAPVARPAPGRMQRNA). Positions 119-130 (SPPPPPPPPPAR) are enriched in pro residues. Low complexity predominate over residues 131 to 142 (AEPAAPVARPAP).

The protein belongs to the MinC family. Interacts with MinD and FtsZ.

Functionally, cell division inhibitor that blocks the formation of polar Z ring septums. Rapidly oscillates between the poles of the cell to destabilize FtsZ filaments that have formed before they mature into polar Z rings. Prevents FtsZ polymerization. The protein is Probable septum site-determining protein MinC of Xanthomonas campestris pv. campestris (strain ATCC 33913 / DSM 3586 / NCPPB 528 / LMG 568 / P 25).